Reading from the N-terminus, the 267-residue chain is 3-deoxy-manno-octulosonate cytidylyltransferase 2 (267 aa).

The protein belongs to the KdsB family.

Its subcellular location is the cytoplasm. The enzyme catalyses 3-deoxy-alpha-D-manno-oct-2-ulosonate + CTP = CMP-3-deoxy-beta-D-manno-octulosonate + diphosphate. Its pathway is nucleotide-sugar biosynthesis; CMP-3-deoxy-D-manno-octulosonate biosynthesis; CMP-3-deoxy-D-manno-octulosonate from 3-deoxy-D-manno-octulosonate and CTP: step 1/1. The protein operates within bacterial outer membrane biogenesis; lipopolysaccharide biosynthesis. In terms of biological role, activates KDO (a required 8-carbon sugar) for incorporation into bacterial lipopolysaccharide in Gram-negative bacteria. This is 3-deoxy-manno-octulosonate cytidylyltransferase 2 from Burkholderia ambifaria (strain MC40-6).